Here is a 1199-residue protein sequence, read N- to C-terminus: MDRSEIVARENPVITQRVTNLLQTNAPLLFMPIDIHEVRYGAYTLFMYGSLENGYKAEVRIENIPVFFDVQIESSNTNQLFLKSLLTAENITYERLETLTQRPVMGYREKEKEFAPYIRIFFKSLYERRKAITYLNNMGYNTAADDTTCYYRMVSRELKLPLTSWIQLQHYSYEPHGLVHRFSVTPEDLVSYQDDGPTDHSIVMAYDIETYSPVKGTVPDPNQANDVVFMICMRIFWIHSTEPLASTCITMAPCKKSSEWTTILCSSEKNLLLSFAEQFSRWAPDICTGFNDSRYDWPFIVEKSMQHGILEEIFNKMSLFWHQKLDTILKCYYVKEKRVKISAEKSIISSFLHTPGCLPIDVRNMCMQLYPKAEKTSLKAFLENCGLDSKVDLPYHLMWKYYETRDSEKMADVAYYCIIDAQRCQDLLVRHNVIPDRREVGILSYTSLYDCIYYAGGHKVCNMLIAYAIHDEYGRIACSTIARGKREHGKYPGAFVIDPVKGLEQDKPTTGLDFASLYPSLIMAYNFSPEKFVASREEANSLMAKGESLHYVSFHFNNRLVEGWFVRHNNVPDKMGLYPKVLIDLLNKRTALKQELKKLGEKKECIHESHPGFKELQFRHAMVDAKQKALKIFMNTFYGEAGNNLSPFFLLPLAGGVTSSGQYNLKLVYNFVINKGYGIKYGDTDSLYITCPDSLYTEVTDAYLNSQKTIKHYEQLCHEKVLLSMKAMSTLCAEVNEYLRRDNGTSYLRMAYEEVLFPVCFTGKKKYYGIAHVNTPNFNTKELFIRGIDIIKQGQTKLTKTIGTRIMEESMKLRRPEDHRPPLIEIVKTVLKDAVVNMKQWNFEDFIQTDAWRPDKDNKAVQIFMSRMHARREQLKKHGAAASQFAEPEPGERFSYVIVEKQVQFDIQGHRTDSSRKGDKMEYVSEAKAKNLPIDILFYINNYVLGLCARFINENEEFQPPDNVSNKDEYAQRRAKSYLQKFVQSIHPKDKSVIKQGIVHRQCYKYVHQEIKKKIGIFADLYKEFFNNTTNPIESFIQSTQFMIQYFDGEQKVNHSMKKMVEQHATSAGNSAGNPAGNALMRAIFTQLITEEKKIVQALYNKGDAIHDLLTYIINNINYKIATFQTKQMLTFEFSSTHVELLLKLNKTWLILAGIHVAKKHLQALLDSYNNEPPSRTFIQQAIEEECGSIKPSCYDFIS.

It belongs to the DNA polymerase type-B family.

The enzyme catalyses DNA(n) + a 2'-deoxyribonucleoside 5'-triphosphate = DNA(n+1) + diphosphate. In terms of biological role, DNA-directed DNA polymerase involved in viral DNA replication. In Ornithodoros (relapsing fever ticks), this protein is DNA polymerase beta.